Reading from the N-terminus, the 1404-residue chain is DNA-directed RNA polymerase subunit beta' (1404 aa).

Residues cysteine 70, cysteine 72, cysteine 85, and cysteine 88 each coordinate Zn(2+). Mg(2+)-binding residues include aspartate 460, aspartate 462, and aspartate 464. 4 residues coordinate Zn(2+): cysteine 814, cysteine 888, cysteine 895, and cysteine 898.

It belongs to the RNA polymerase beta' chain family. The RNAP catalytic core consists of 2 alpha, 1 beta, 1 beta' and 1 omega subunit. When a sigma factor is associated with the core the holoenzyme is formed, which can initiate transcription. Mg(2+) serves as cofactor. Zn(2+) is required as a cofactor.

It catalyses the reaction RNA(n) + a ribonucleoside 5'-triphosphate = RNA(n+1) + diphosphate. In terms of biological role, DNA-dependent RNA polymerase catalyzes the transcription of DNA into RNA using the four ribonucleoside triphosphates as substrates. In Shewanella halifaxensis (strain HAW-EB4), this protein is DNA-directed RNA polymerase subunit beta'.